We begin with the raw amino-acid sequence, 785 residues long: Formin-like protein 3 (785 aa).

Positions 1-20 (MGRLRLAFLAISLVVFVCVS) are cleaved as a signal peptide. Residues 96–145 (YDWLAPASSPNEPPAETPDESSPSPSEETPSVVAPSQSVPGPPRPPPQRE) form a disordered region. A compositionally biased stretch (low complexity) spans 115–134 (ESSPSPSEETPSVVAPSQSV). Residues 154–174 (LIIAVASTAVLTFVFVALMFL) form a helical membrane-spanning segment. Disordered regions lie at residues 184 to 228 (AVGS…KKRS), 241 to 329 (EFST…APKT), and 730 to 785 (ETTK…SSPS). A compositionally biased stretch (polar residues) spans 201–223 (STGSTENSPTVASTSRKMFSVAS). Over residues 256-303 (LKLPPGRSAPPPPPAAAPPPQPPPPPPPKPQPPPPPKIARPPPAPPKG) the composition is skewed to pro residues. Residues 321-747 (DSETGAPKTK…SGKKESEMTT (427 aa)) form the FH2 domain. Positions 745 to 754 (MTTSDSNQPS) are enriched in polar residues. Residues 773 to 785 (SDDSDDEEDSSPS) are compositionally biased toward acidic residues.

Belongs to the formin-like family. Class-I subfamily.

The protein resides in the membrane. Functionally, acts as actin nucleation factor that directs the formation of actin cables and polarized growth in pollen tubes. This chain is Formin-like protein 3 (FH3), found in Arabidopsis thaliana (Mouse-ear cress).